The sequence spans 343 residues: L-threonine 3-dehydrogenase (343 aa).

Cysteine 39 is a binding site for Zn(2+). Catalysis depends on charge relay system residues threonine 41 and histidine 44. Zn(2+) contacts are provided by histidine 64, glutamate 65, cysteine 94, cysteine 97, cysteine 100, and cysteine 108. Residues isoleucine 176, aspartate 196, arginine 201, 263–265, and 287–288 each bind NAD(+); these read LGI and IY.

The protein belongs to the zinc-containing alcohol dehydrogenase family. As to quaternary structure, homotetramer. The cofactor is Zn(2+).

It is found in the cytoplasm. It carries out the reaction L-threonine + NAD(+) = (2S)-2-amino-3-oxobutanoate + NADH + H(+). It functions in the pathway amino-acid degradation; L-threonine degradation via oxydo-reductase pathway; glycine from L-threonine: step 1/2. In terms of biological role, catalyzes the NAD(+)-dependent oxidation of L-threonine to 2-amino-3-ketobutyrate. The polypeptide is L-threonine 3-dehydrogenase (Anaeromyxobacter sp. (strain Fw109-5)).